A 258-amino-acid polypeptide reads, in one-letter code: Thrombin-like enzyme ancrod-2 (258 aa).

Positions 1 to 18 are cleaved as a signal peptide; it reads MVLIRVLANLVILQLSYA. A propeptide spanning residues 19–24 is cleaved from the precursor; it reads QKSSEL. One can recognise a Peptidase S1 domain in the interval 25–251; it reads VIGGDECNIN…HLHWILSIMA (227 aa). 6 disulfide bridges follow: C31-C165, C52-C68, C102-C256, C144-C212, C176-C191, and C202-C227. Active-site charge relay system residues include H67 and D112. 2 N-linked (GlcNAc...) asparagine glycosylation sites follow: N123 and N172. Residue S206 is the Charge relay system of the active site. A glycan (N-linked (GlcNAc...) asparagine) is linked at N253.

This sequence belongs to the peptidase S1 family. Snake venom subfamily. In terms of assembly, monomer. Expressed by the venom gland.

Its subcellular location is the secreted. The catalysed reaction is Selective cleavage of Arg-|-Xaa bond in fibrinogen, to form fibrin, and release fibrinopeptide A. The specificity of further degradation of fibrinogen varies with species origin of the enzyme.. Functionally, thrombin-like snake venom serine protease. Cleaves fibrinogen (FGA) to split of fibrinopeptides AM, AO, and AY; the aberrant fibrinogen is then incapable of being cross-linked, forming easily dispersible clots. The polypeptide is Thrombin-like enzyme ancrod-2 (Calloselasma rhodostoma (Malayan pit viper)).